The sequence spans 473 residues: Cysteine--tRNA ligase (473 aa).

Residue C28 participates in Zn(2+) binding. The short motif at 30–40 is the 'HIGH' region element; sequence VTVYDLCHLGH. C213, H238, and E242 together coordinate Zn(2+). Residues 270 to 274 carry the 'KMSKS' region motif; sequence KMSKS. K273 is a binding site for ATP.

The protein belongs to the class-I aminoacyl-tRNA synthetase family. Monomer. It depends on Zn(2+) as a cofactor.

The protein localises to the cytoplasm. It carries out the reaction tRNA(Cys) + L-cysteine + ATP = L-cysteinyl-tRNA(Cys) + AMP + diphosphate. In Blochmanniella pennsylvanica (strain BPEN), this protein is Cysteine--tRNA ligase.